The sequence spans 314 residues: MPNLKFIRDRIQSVKNTKKITEAMRLVAAAKVRRAQEQVIATRPFADALAQVLYNLQNRLQFGEVSLPLLTQREIKTVAVLVVTGDRGLCGGYNANVIKRTEQRIKELKSQGINYKLVLIGRKAVQYFERRNAPIQTKYTELSQIPSASEASTISDELLSLFLSETVDRVELIYTRFLSLISSKPVVQTLLPLTTKGLDTPDDEIFRLVTKGGKFQVEREKVSASVSSFPQDMIFEQDPVQILDSLLPLYLNNQLLRALQESAASELAARMTAMSSASDNAGELIKTLSLSYNKARQAAITQEILEVVAGANAL.

The protein belongs to the ATPase gamma chain family. F-type ATPases have 2 components, CF(1) - the catalytic core - and CF(0) - the membrane proton channel. CF(1) has five subunits: alpha(3), beta(3), gamma(1), delta(1), epsilon(1). CF(0) has three main subunits: a, b and c.

The protein resides in the cellular thylakoid membrane. Produces ATP from ADP in the presence of a proton gradient across the membrane. The gamma chain is believed to be important in regulating ATPase activity and the flow of protons through the CF(0) complex. In Gloeothece citriformis (strain PCC 7424) (Cyanothece sp. (strain PCC 7424)), this protein is ATP synthase gamma chain.